Here is a 267-residue protein sequence, read N- to C-terminus: Inositol-1-monophosphatase (267 aa).

The Mg(2+) site is built by Glu-66, Asp-84, Leu-86, and Asp-87. Substrate is bound at residue Glu-66. Residues Leu-86–Ser-89, Arg-182, and Asp-213 each bind substrate. Asp-213 is a Mg(2+) binding site.

This sequence belongs to the inositol monophosphatase superfamily. It depends on Mg(2+) as a cofactor.

It catalyses the reaction a myo-inositol phosphate + H2O = myo-inositol + phosphate. This chain is Inositol-1-monophosphatase (suhB), found in Aeropyrum pernix (strain ATCC 700893 / DSM 11879 / JCM 9820 / NBRC 100138 / K1).